The chain runs to 410 residues: Meiotic driver wtf18 (410 aa).

The segment at 1–39 (MKNKGYPLRSSMDELSTKNDNEIDLEKGPLPEYNSEDGS) is disordered. The segment covering 11–29 (SMDELSTKNDNEIDLEKGP) has biased composition (basic and acidic residues). 10 helical membrane passes run 89–109 (LLISVLAVIVVFFTAWVCVNP), 119–139 (AFFVTIGITCPILLITIFCFF), 149–169 (CIKVTVIFLAQCVKVTAVFLA), 174–194 (VTAVFLAKCVKVTAVFLAKCI), 204–224 (CVKVTAVFLAKCVKVIAVGLY), 229–249 (DLVVTIWLAWVVICFILFGCV), 265–285 (CSISAALFFILLLVCIPIWTL), 289–309 (LFGLFQVLGVQSCVVIVTKGL), 319–339 (ATGYEIEASSLFVIGNFLFFY), and 353–373 (FIGNGIASFLGGLGNAFGGIG).

It belongs to the WTF family. As to quaternary structure, homomer. Forms protein aggregates. The two isoforms can interact with each other and with themselves. High sequence similarity is required for their interaction.

Its subcellular location is the spore membrane. The protein localises to the vacuole membrane. It is found in the ascus epiplasm. It localises to the cytoplasm. The protein resides in the endoplasmic reticulum membrane. Promotes unequal transmission of alleles from the parental zygote to progeny spores by acting as poison/antidote system where the poison and antidote proteins are produced from the same locus; the poison component is trans-acting and targets all spores within an ascus whereas the antidote component is spore-specific, leading to poisoning of all progeny that do not inherit the allele. Functionally, localizes isoform 2 to the vacuole thereby facilitating its degradation. In addition to suppressing isoform 2, also suppresses S.pombe strain 972 wtf13 isoform 2. Its function is as follows. Forms toxic aggregates that disrupt spore maturation. The chain is Meiotic driver wtf18 from Schizosaccharomyces pombe (Fission yeast).